The chain runs to 867 residues: MSLSAHEIRELFLSFFEKKGHTRVKSAPLVPENDPTLLFVNAGMVPFKNVFLGLEKRPYKRATSCQKCLRVSGKHNDLEQVGYTSRHHTFFEMLGNFSFGDYFKKEAIEYAWEFVTEVLKLPKEKLYVSVYKDDEEAYRIWNEHIGIPSERIWRLGEEDNFWQMGDVGPCGPSSEIYVDRGEEYEGDERYLEIWNLVFMQYNRDENGVLTPLPHPNIDTGMGLERIASVLQGKNSNFEIDIIFPLIQFGEEVSGKKYGEKFETDVALRVIADHLRAITFAISDGVIPSNEGRGYVIRRILRRAMRFGYKLGIENPFLYKGVDLVVDIMKEPYPELELSREFVKGIVKGEEKRFIKTLKAGMEYIQEVIQKALEEGRKTLSGKEVFTAYDTYGFPVDLIDEIAREKGLGIDLEGFQCELEEQRERARKHFKVEAKKVKPVYSHLKELGKTSAFVGYEHMEWESQVVGLVKGEGLVSELKEGEEGEVVLKETPFYPEGGGQIGDAGIIESDKALFKVEDTQKPTEGIIVHIGKVLKGTLKVGDTVHARVDKERRWDIMRNHTATHLLHAALRNVLGEHVRQAGSLVADKYLRFDFTHFSALTEEELKRVEELVNEKIRENLPVNVMEMAYDEALKTGAIAIFEEKYGERVRVISCGEFSKELCGGTHVSATGDIGYFKIISESSVGAGVRRIVAQTGRWSVETAFKEHQTLKKASSALGVGEEEVIQKIEELKEEIKDREREIQRLKQELLKLQIREVVKEENVGDFTLHYGVFEEVEPEELRNLADMLRQRTKKDVVFIASRKGDKINFVIGVSKEISDKVNAKEVIREVGKVLKGGGGGRADLAQGGGKAPDKFPEAVKLLKEILSG.

Zn(2+) contacts are provided by His559, His563, Cys661, and His665.

The protein belongs to the class-II aminoacyl-tRNA synthetase family. Zn(2+) is required as a cofactor.

The protein localises to the cytoplasm. It catalyses the reaction tRNA(Ala) + L-alanine + ATP = L-alanyl-tRNA(Ala) + AMP + diphosphate. Functionally, catalyzes the attachment of alanine to tRNA(Ala) in a two-step reaction: alanine is first activated by ATP to form Ala-AMP and then transferred to the acceptor end of tRNA(Ala). Also edits incorrectly charged Ser-tRNA(Ala) and Gly-tRNA(Ala) via its editing domain. This Aquifex aeolicus (strain VF5) protein is Alanine--tRNA ligase.